The primary structure comprises 261 residues: Cytochrome c oxidase subunit 3 (261 aa).

Residues 1 to 15 (MAHQAHPYHMVDPSP) lie on the Mitochondrial matrix side of the membrane. Residues 16-34 (WPLTGATAALLMTSGLAIW) traverse the membrane as a helical segment. The Mitochondrial intermembrane segment spans residues 35–40 (FHFHSL). Residues 41 to 66 (LLLYLGLTLLLLTMIQWWRDIIREGT) traverse the membrane as a helical segment. At 67-72 (FQGHHT) the chain is on the mitochondrial matrix side. The chain crosses the membrane as a helical span at residues 73-105 (PPVQKGLRYGMILFIVSEVFFFLGFFWAFYHSS). Residues 106 to 128 (LAPTPELGGCWPPTGINPLDPFE) are Mitochondrial intermembrane-facing. Residues 129–152 (VPLLNTAVLLASGVTVTWAHHGLM) form a helical membrane-spanning segment. The Mitochondrial matrix segment spans residues 153–155 (EGN). A helical membrane pass occupies residues 156–183 (RKEAIQALTLTIILGVYFTALQAMEYYE). The Mitochondrial intermembrane portion of the chain corresponds to 184-190 (APFTIAD). A helical transmembrane segment spans residues 191–223 (GVYGTTFFVATGFHGLHVIIGSTFLAVCLLRQV). Topologically, residues 224–232 (LYHFTSEHH) are mitochondrial matrix. The chain crosses the membrane as a helical span at residues 233–256 (FGFEAAAWYWHFVDVVWLFLYVSI). Topologically, residues 257–261 (YWWGS) are mitochondrial intermembrane.

This sequence belongs to the cytochrome c oxidase subunit 3 family. As to quaternary structure, component of the cytochrome c oxidase (complex IV, CIV), a multisubunit enzyme composed of 14 subunits. The complex is composed of a catalytic core of 3 subunits MT-CO1, MT-CO2 and MT-CO3, encoded in the mitochondrial DNA, and 11 supernumerary subunits COX4I, COX5A, COX5B, COX6A, COX6B, COX6C, COX7A, COX7B, COX7C, COX8 and NDUFA4, which are encoded in the nuclear genome. The complex exists as a monomer or a dimer and forms supercomplexes (SCs) in the inner mitochondrial membrane with NADH-ubiquinone oxidoreductase (complex I, CI) and ubiquinol-cytochrome c oxidoreductase (cytochrome b-c1 complex, complex III, CIII), resulting in different assemblies (supercomplex SCI(1)III(2)IV(1) and megacomplex MCI(2)III(2)IV(2)).

It is found in the mitochondrion inner membrane. The catalysed reaction is 4 Fe(II)-[cytochrome c] + O2 + 8 H(+)(in) = 4 Fe(III)-[cytochrome c] + 2 H2O + 4 H(+)(out). Component of the cytochrome c oxidase, the last enzyme in the mitochondrial electron transport chain which drives oxidative phosphorylation. The respiratory chain contains 3 multisubunit complexes succinate dehydrogenase (complex II, CII), ubiquinol-cytochrome c oxidoreductase (cytochrome b-c1 complex, complex III, CIII) and cytochrome c oxidase (complex IV, CIV), that cooperate to transfer electrons derived from NADH and succinate to molecular oxygen, creating an electrochemical gradient over the inner membrane that drives transmembrane transport and the ATP synthase. Cytochrome c oxidase is the component of the respiratory chain that catalyzes the reduction of oxygen to water. Electrons originating from reduced cytochrome c in the intermembrane space (IMS) are transferred via the dinuclear copper A center (CU(A)) of subunit 2 and heme A of subunit 1 to the active site in subunit 1, a binuclear center (BNC) formed by heme A3 and copper B (CU(B)). The BNC reduces molecular oxygen to 2 water molecules using 4 electrons from cytochrome c in the IMS and 4 protons from the mitochondrial matrix. This chain is Cytochrome c oxidase subunit 3 (MT-CO3), found in Scyliorhinus canicula (Small-spotted catshark).